A 108-amino-acid polypeptide reads, in one-letter code: Evasin P1229 (108 aa).

The signal sequence occupies residues 1–31 (MEVRTFAFLQIVVFVALGIQLFAAVTDAADA). Intrachain disulfides connect cysteine 41/cysteine 63, cysteine 45/cysteine 65, and cysteine 56/cysteine 76. N-linked (GlcNAc...) asparagine glycosylation is present at asparagine 44. The interval 88-108 (GDPNNSDLDAATPRHPDASSR) is disordered. A glycan (N-linked (GlcNAc...) asparagine) is linked at asparagine 91. Residues 99-108 (TPRHPDASSR) show a composition bias toward basic and acidic residues.

It localises to the secreted. In terms of biological role, salivary chemokine-binding protein which binds to host chemokines CXCL1 and CXCL8. This Ixodes ricinus (Common tick) protein is Evasin P1229.